The following is a 167-amino-acid chain: Urease accessory protein UreE (167 aa).

The protein belongs to the UreE family.

The protein localises to the cytoplasm. Involved in urease metallocenter assembly. Binds nickel. Probably functions as a nickel donor during metallocenter assembly. The protein is Urease accessory protein UreE of Pseudomonas paraeruginosa (strain DSM 24068 / PA7) (Pseudomonas aeruginosa (strain PA7)).